We begin with the raw amino-acid sequence, 274 residues long: Rhamnulose-1-phosphate aldolase (274 aa).

Residue Glu117 is part of the active site. Zn(2+) contacts are provided by His141, His143, and His212.

The protein belongs to the aldolase class II family. RhaD subfamily. Homotetramer. Zn(2+) is required as a cofactor.

The protein localises to the cytoplasm. It carries out the reaction L-rhamnulose 1-phosphate = (S)-lactaldehyde + dihydroxyacetone phosphate. It participates in carbohydrate degradation; L-rhamnose degradation; glycerone phosphate from L-rhamnose: step 3/3. Its function is as follows. Catalyzes the reversible cleavage of L-rhamnulose-1-phosphate to dihydroxyacetone phosphate (DHAP) and L-lactaldehyde. The chain is Rhamnulose-1-phosphate aldolase from Escherichia coli O127:H6 (strain E2348/69 / EPEC).